The chain runs to 430 residues: Endo-beta-1,4-glucanase celB (430 aa).

Positions 1 to 16 are cleaved as a signal peptide; sequence MALLLSLSLLATTISA. N-linked (GlcNAc...) asparagine glycans are attached at residues Asn-43 and Asn-153. The active-site Nucleophile is Glu-216. The Proton donor role is filled by Glu-221. N-linked (GlcNAc...) asparagine glycosylation occurs at Asn-395.

The protein belongs to the glycosyl hydrolase 7 (cellulase C) family.

It localises to the secreted. It catalyses the reaction Endohydrolysis of (1-&gt;4)-beta-D-glucosidic linkages in cellulose, lichenin and cereal beta-D-glucans.. Functionally, has endoglucanase activity on substrates containing beta-1,4 glycosidic bonds, like in carboxymethylcellulose (CMC), hydroxyethylcellulose (HEC) and beta-glucan. Involved in the degradation of complex natural cellulosic substrates. The sequence is that of Endo-beta-1,4-glucanase celB (celB) from Emericella nidulans (strain FGSC A4 / ATCC 38163 / CBS 112.46 / NRRL 194 / M139) (Aspergillus nidulans).